Reading from the N-terminus, the 468-residue chain is F-box/LRR-repeat protein At4g14096 (468 aa).

An F-box domain is found at 7 to 60 (RDIISSLPEAISCHILSFLPTKEAASTSVLSKKWRYLFAFVPNLDLDESVYLNP). 6 LRR repeats span residues 114–136 (VSDL…MFLS), 138–167 (TLVR…YIDS), 169–194 (YFEK…VLDD), 216–241 (STQV…KFTD), 292–323 (TLYL…TIES), and 324–349 (NPEV…IFQG).

The sequence is that of F-box/LRR-repeat protein At4g14096 from Arabidopsis thaliana (Mouse-ear cress).